The chain runs to 456 residues: Exodeoxyribonuclease 7 large subunit (456 aa).

Residues 1–103 (MLPSQSPAIF…DYQIIVESMQ (103 aa)) are binds ssDNA, also required to bind the small subunit.

Belongs to the XseA family. In terms of assembly, heterooligomer composed of two different subunits with an approximate ratio of 4:1 for small to large subunit. Also estimated to have a 6:1 ration for small to large subunits. Does not require a metal cofactor. serves as cofactor.

Its subcellular location is the cytoplasm. It catalyses the reaction Exonucleolytic cleavage in either 5'- to 3'- or 3'- to 5'-direction to yield nucleoside 5'-phosphates.. Its function is as follows. Bidirectionally degrades single-stranded DNA into large acid-insoluble oligonucleotides, which are then degraded further into small acid-soluble oligonucleotides. It can degrade 3' or 5' ss regions extending from the termini of duplex DNA molecules and displaced ss regions. It can also excise thymine dimers in vitro. ssDNA-binding requires both subunits. Required for production of the mature 5'-end of retron Ec78 or Ec83 msDNA. Overproduction of this subunit in the absence of an equivalent quantity of the small subunit is toxic, causing cell elongation and chromosome fragmentation or loss; its toxicity is mostly suppressed by RecA. The sequence is that of Exodeoxyribonuclease 7 large subunit from Escherichia coli (strain K12).